A 431-amino-acid polypeptide reads, in one-letter code: Probable zinc metalloprotease Lema_P086240 (431 aa).

N-linked (GlcNAc...) asparagine glycosylation is present at N46. The Zn(2+) site is built by H117, D137, and E170. A glycan (N-linked (GlcNAc...) asparagine) is linked at N185. D197 is a binding site for Zn(2+). N-linked (GlcNAc...) asparagine glycans are attached at residues N258, N310, N349, N359, and N369. Residues 344–431 (PGMPRNVTID…KSPAVYPFPG (88 aa)) enclose the Fibronectin type-III domain.

This sequence belongs to the peptidase M28 family. M28B subfamily. Zn(2+) serves as cofactor.

It localises to the secreted. In Leptosphaeria maculans (strain JN3 / isolate v23.1.3 / race Av1-4-5-6-7-8) (Blackleg fungus), this protein is Probable zinc metalloprotease Lema_P086240.